The sequence spans 260 residues: Small ribosomal subunit protein uS3 (260 aa).

Residues 39-114 (LRQYIEQKLG…QIRINVVEVQ (76 aa)) enclose the KH type-2 domain. A disordered region spans residues 218 to 260 (QEVATPPPSPRDRDRDRGDRDREPRRRQQQRRRQQFEDRSNEG). Basic and acidic residues-rich tracts occupy residues 227–243 (PRDRDRDRGDRDREPRR) and 251–260 (QQFEDRSNEG).

Belongs to the universal ribosomal protein uS3 family. Part of the 30S ribosomal subunit. Forms a tight complex with proteins S10 and S14.

In terms of biological role, binds the lower part of the 30S subunit head. Binds mRNA in the 70S ribosome, positioning it for translation. In Nostoc sp. (strain PCC 7120 / SAG 25.82 / UTEX 2576), this protein is Small ribosomal subunit protein uS3.